A 122-amino-acid polypeptide reads, in one-letter code: Large ribosomal subunit protein uL14 (122 aa).

This sequence belongs to the universal ribosomal protein uL14 family. Part of the 50S ribosomal subunit. Forms a cluster with proteins L3 and L19. In the 70S ribosome, L14 and L19 interact and together make contacts with the 16S rRNA in bridges B5 and B8.

Its function is as follows. Binds to 23S rRNA. Forms part of two intersubunit bridges in the 70S ribosome. The sequence is that of Large ribosomal subunit protein uL14 from Nocardioides sp. (strain ATCC BAA-499 / JS614).